The primary structure comprises 191 residues: Fe/S biogenesis protein NfuA (191 aa).

Residues Cys149 and Cys152 each contribute to the [4Fe-4S] cluster site.

It belongs to the NfuA family. Homodimer. [4Fe-4S] cluster is required as a cofactor.

Functionally, involved in iron-sulfur cluster biogenesis. Binds a 4Fe-4S cluster, can transfer this cluster to apoproteins, and thereby intervenes in the maturation of Fe/S proteins. Could also act as a scaffold/chaperone for damaged Fe/S proteins. In Citrobacter koseri (strain ATCC BAA-895 / CDC 4225-83 / SGSC4696), this protein is Fe/S biogenesis protein NfuA.